A 173-amino-acid polypeptide reads, in one-letter code: Disulfide bond formation protein B 2 (173 aa).

Residues 1–9 (MSLAGSRLL) are Cytoplasmic-facing. Residues 10–26 (FSLVFLVGALASWAAFN) traverse the membrane as a helical segment. Topologically, residues 27-44 (LQTGGGLESCSLWSVQRL) are periplasmic. The chain crosses the membrane as a helical span at residues 45 to 61 (LLLALGGVNLLAVIQGP). Residues 62-67 (GRVGRA) lie on the Cytoplasmic side of the membrane. Residues 68–85 (VYWGLNLLLGLLGVVTAG) traverse the membrane as a helical segment. Over 86 to 142 (RHVLLQNIPSEQLLACLPDMSFMLRQLSWWQALKLTFMGTSDCAEVTWTLLDMSLPE) the chain is Periplasmic. Cysteines 101 and 128 form a disulfide. The helical transmembrane segment at 143–161 (WSLLFFVIMLIFSGYRLWR) threads the bilayer. At 162–173 (QLRGARKAVALP) the chain is on the cytoplasmic side.

This sequence belongs to the DsbB family.

Its subcellular location is the cell inner membrane. Functionally, required for disulfide bond formation in some periplasmic proteins. Acts by oxidizing the DsbA protein. The protein is Disulfide bond formation protein B 2 of Pseudomonas fluorescens (strain ATCC BAA-477 / NRRL B-23932 / Pf-5).